A 231-amino-acid chain; its full sequence is Small proline-rich protein 3 (231 aa).

Residues 1–104 form a disordered region; it reads MSSYQQKQPF…GSGYSVVPQP (104 aa). Residue serine 2 is modified to N-acetylserine. Tandem repeats lie at residues 55-62, 63-70, 71-78, 79-86, 87-94, 95-102, 103-110, 111-118, 119-126, 127-134, 135-142, 143-150, 151-158, 159-166, 167-174, 175-182, 183-190, 191-198, 199-206, 207-214, and 215-222. Positions 55 to 222 are 21 X 8 AA approximate tandem repeats; sequence EQGYVKIPEQ…VQEPNPSIVT (168 aa). Polar residues predominate over residues 80 to 94; sequence SGNTKVPESGCTSVP. The interval 188–231 is disordered; it reads KVPESGCTSVPGPGYPTVPQPGYTKVQEPNPSIVTPGLSQKKTK. Residues 214–231 show a composition bias toward polar residues; the sequence is QEPNPSIVTPGLSQKKTK.

It belongs to the cornifin (SPRR) family. As to expression, suprabasal layers of the squamous epithelia of esophagus, tongue and oral mucosa.

It is found in the cytoplasm. Its function is as follows. Can serve as a substrate in transglutaminase-catalyzed cross linking reactions and can function as a cross-linked envelope precursor. This chain is Small proline-rich protein 3 (SPRR3), found in Oryctolagus cuniculus (Rabbit).